The sequence spans 509 residues: Transcription factor atf-7 (509 aa).

The segment covering Thr-283–Ser-303 has biased composition (polar residues). Disordered stretches follow at residues Thr-283–Ile-318 and Asn-337–Arg-400. The span at Ser-308–Ile-318 shows a compositional bias: basic and acidic residues. Low complexity predominate over residues Asn-337 to Asn-364. The span at Pro-390 to Arg-400 shows a compositional bias: basic and acidic residues. The bZIP domain occupies Asp-391–Leu-464. The interval Arg-393 to Lys-413 is basic motif. The segment at Met-419–Val-450 is leucine-zipper.

It belongs to the bZIP family. As to quaternary structure, interacts with serine/threonine kinase pmk-1; perhaps in a manner dependent on dual specificity protein kinase sek-1. Expressed in intestinal cells.

It is found in the nucleus. The protein localises to the chromosome. Functionally, transcription factor which regulates the transcription of various genes, including those involved in innate immunity and oxidative stress responses. Binds to promoter regions of genes, probably at 5'-[GACGTCA]-3' consensus sequences. Together with transcription factor daf-19, involved in regulation of the serotonergic response of ADF neurons to pathogenic food. Modulates response to infection by the Gram-negative bacterium P.aeruginosa, acting downstream of the p38 signal transduction pathway effector serine/threonine kinase pmk-1. May act with transcription factor elt-2 to control p38 gene induction in response to bacterial infection. May be phosphorylated by pmk-1. Regulates transcription of the metallothionein gene, mtl-1, perhaps acting downstream of pmk-1. In Caenorhabditis elegans, this protein is Transcription factor atf-7.